We begin with the raw amino-acid sequence, 209 residues long: RNA chaperone ProQ (209 aa).

The segment at 105-148 is disordered; it reads ESQDKAKAKRAALAPKPAAKKAPKKVAVPQRAKTERPAKPAPKA.

This sequence belongs to the ProQ family.

Its subcellular location is the cytoplasm. Its function is as follows. RNA chaperone with significant RNA binding, RNA strand exchange and RNA duplexing activities. The chain is RNA chaperone ProQ from Shewanella baltica (strain OS223).